A 195-amino-acid chain; its full sequence is uncharacterized protein (195 aa).

Disordered regions lie at residues 1-51 (MTHN…GPSY) and 160-195 (SYSQ…KSCN). The span at 13 to 28 (SYQNQAPQPQYYTRQP) shows a compositional bias: polar residues. Residues 170–189 (YYKKHKHHSHHRPKHVKSSR) show a composition bias toward basic residues.

This is an uncharacterized protein from Acanthamoeba polyphaga mimivirus (APMV).